Reading from the N-terminus, the 539-residue chain is T-complex protein 1 subunit zeta (539 aa).

Belongs to the TCP-1 chaperonin family. Heterooligomeric complex of about 850 to 900 kDa that forms two stacked rings, 12 to 16 nm in diameter.

It is found in the cytoplasm. Its function is as follows. Molecular chaperone; assists the folding of proteins upon ATP hydrolysis. Known to play a role, in vitro, in the folding of actin and tubulin. In Dictyostelium discoideum (Social amoeba), this protein is T-complex protein 1 subunit zeta (cct6).